Here is a 187-residue protein sequence, read N- to C-terminus: 3'-5' DNA exonuclease Cap18 (187 aa).

The Exonuclease domain occupies 9–173; sequence VSVDVETSGP…HDARYQAELF (165 aa). Positions 12, 25, 160, and 165 each coordinate Mg(2+). His160 functions as the Proton donor/acceptor in the catalytic mechanism.

The protein belongs to the Cap18 exonuclease family. In terms of assembly, homodimer.

Functionally, effector component of a CBASS antivirus system. CBASS (cyclic oligonucleotide-based antiphage signaling system) provides immunity against bacteriophage. The CD-NTase protein synthesizes cyclic nucleotides in response to infection; these serve as specific second messenger signals. The signals activate a diverse range of effectors, leading to bacterial cell death and thus abortive phage infection. A type III CBASS system. A sequence non-specific 3'-5' DNA exonuclease that preferentially degrades ssDNA with 3' overhangs or a mismatch at the 3' end. Expression of this CBASS system (Cap17-CapW-CdnC-Cap7-Cap6-Cap18-Cap19) in a susceptible E.coli (strain JP313) confers resistance to bacteriophage lambda cI--. In Escherichia coli, this protein is 3'-5' DNA exonuclease Cap18.